A 389-amino-acid polypeptide reads, in one-letter code: Stilbene synthase 1 (389 aa).

Residue 55–58 (KFQR) coordinates substrate. The active site involves Cys-164. Substrate-binding positions include Leu-267 and 305–307 (GGR).

It belongs to the thiolase-like superfamily. Chalcone/stilbene synthases family. Homodimer.

It localises to the cytoplasm. It carries out the reaction 4-coumaroyl-CoA + 3 malonyl-CoA + 3 H(+) = trans-resveratrol + 4 CO2 + 4 CoA. The protein operates within phytoalexin biosynthesis; 3,4',5-trihydroxystilbene biosynthesis; 3,4',5-trihydroxystilbene from trans-4-coumarate: step 2/2. The polypeptide is Stilbene synthase 1 (Arachis hypogaea (Peanut)).